A 357-amino-acid chain; its full sequence is DNA integrity scanning protein DisA (357 aa).

One can recognise a DAC domain in the interval 8-148 (PQELIEKIKL…NYKYVVNQVD (141 aa)). 5 residues coordinate 3',3'-c-di-AMP: G76, L94, T107, T111, and R128.

This sequence belongs to the DisA family. In terms of assembly, homooctamer. It depends on Mg(2+) as a cofactor.

The enzyme catalyses 2 ATP = 3',3'-c-di-AMP + 2 diphosphate. Inhibited by 3'-dATP. Its function is as follows. Participates in a DNA-damage check-point. DisA forms globular foci that rapidly scan along the chromosomes searching for lesions. Has diadenylate cyclase activity, catalyzing the condensation of 2 ATP molecules into cyclic di-AMP (c-di-AMP). c-di-AMP likely acts as a signaling molecule that may couple DNA integrity with a cellular process. This rate-limiting step is the accessibility of the active site; mutating the possible exit tunnel (residues 128-130) increases product 2-fold despite Arg-130 being important for ATP-binding. Does not convert GTP to c-di-GMP. In Thermotoga maritima (strain ATCC 43589 / DSM 3109 / JCM 10099 / NBRC 100826 / MSB8), this protein is DNA integrity scanning protein DisA.